The sequence spans 348 residues: D-erythrose-4-phosphate dehydrogenase (348 aa).

12–13 (RI) contacts NAD(+). Substrate-binding positions include 154-156 (SCT), R200, 213-214 (TR), and R236. The active-site Nucleophile is C155. Residue N318 coordinates NAD(+).

Belongs to the glyceraldehyde-3-phosphate dehydrogenase family. Epd subfamily. As to quaternary structure, homotetramer.

The protein resides in the cytoplasm. The enzyme catalyses D-erythrose 4-phosphate + NAD(+) + H2O = 4-phospho-D-erythronate + NADH + 2 H(+). Its pathway is cofactor biosynthesis; pyridoxine 5'-phosphate biosynthesis; pyridoxine 5'-phosphate from D-erythrose 4-phosphate: step 1/5. Catalyzes the NAD-dependent conversion of D-erythrose 4-phosphate to 4-phosphoerythronate. The chain is D-erythrose-4-phosphate dehydrogenase from Erwinia tasmaniensis (strain DSM 17950 / CFBP 7177 / CIP 109463 / NCPPB 4357 / Et1/99).